The following is a 299-amino-acid chain: Lathosterol oxidase (299 aa).

The next 3 helical transmembrane spans lie at 32–52 (VSLLVVTNLGAYILYFFCATL), 79–99 (FTVKSLPWISIPTVSLFLLEL), and 117–137 (IHLIMSVISFLFFTDMLIYWI). Residues 124-252 (ISFLFFTDML…YFTLWDRIGG (129 aa)) enclose the Fatty acid hydroxylase domain. The Histidine box-1 motif lies at 138–143 (HRGLHH). The Histidine box-2 motif lies at 151–155 (HKPHH). The Histidine box-3 signature appears at 228–233 (HHTDHH). The residue at position 253 (Ser253) is a Phosphoserine.

The protein belongs to the sterol desaturase family. Requires Fe cation as cofactor.

The protein resides in the endoplasmic reticulum membrane. It carries out the reaction a Delta(7)-sterol + 2 Fe(II)-[cytochrome b5] + O2 + 2 H(+) = a Delta(5),Delta(7)-sterol + 2 Fe(III)-[cytochrome b5] + 2 H2O. The enzyme catalyses lathosterol + 2 Fe(II)-[cytochrome b5] + O2 + 2 H(+) = 7-dehydrocholesterol + 2 Fe(III)-[cytochrome b5] + 2 H2O. It catalyses the reaction 5alpha-cholesta-7,24-dien-3beta-ol + 2 Fe(II)-[cytochrome b5] + O2 + 2 H(+) = 7-dehydrodesmosterol + 2 Fe(III)-[cytochrome b5] + 2 H2O. It functions in the pathway steroid biosynthesis; cholesterol biosynthesis. Catalyzes the penultimate step of the biosynthesis of cholesterol, the dehydrogenation of lathosterol into 7-dehydrocholesterol (7-DHC). Cholesterol is the major sterol component in mammalian membranes and a precursor for bile acid and steroid hormone synthesis. In addition to its essential role in cholesterol biosynthesis, it also indirectly regulates ferroptosis through the production of 7-DHC. By diverting the spread of damage caused by peroxyl radicals from the phospholipid components to its sterol nucleus, 7-DHC prevents this form of cell death. In Rattus norvegicus (Rat), this protein is Lathosterol oxidase.